The chain runs to 154 residues: Endoribonuclease YbeY (154 aa).

His113, His117, and His123 together coordinate Zn(2+).

The protein belongs to the endoribonuclease YbeY family. Zn(2+) is required as a cofactor.

It is found in the cytoplasm. Its function is as follows. Single strand-specific metallo-endoribonuclease involved in late-stage 70S ribosome quality control and in maturation of the 3' terminus of the 16S rRNA. The protein is Endoribonuclease YbeY of Aeromonas hydrophila subsp. hydrophila (strain ATCC 7966 / DSM 30187 / BCRC 13018 / CCUG 14551 / JCM 1027 / KCTC 2358 / NCIMB 9240 / NCTC 8049).